Reading from the N-terminus, the 122-residue chain is Basic phospholipase A2 10 (122 aa).

Cystine bridges form between Cys-26-Cys-114, Cys-28-Cys-43, Cys-42-Cys-94, Cys-48-Cys-122, Cys-49-Cys-87, Cys-56-Cys-80, and Cys-74-Cys-85. Ca(2+) is bound by residues Tyr-27, Gly-29, and Gly-31. Residue His-46 is part of the active site. Residue Asp-47 participates in Ca(2+) binding. The active site involves Asp-88.

Ca(2+) is required as a cofactor. Expressed by the venom gland.

Its subcellular location is the secreted. The catalysed reaction is a 1,2-diacyl-sn-glycero-3-phosphocholine + H2O = a 1-acyl-sn-glycero-3-phosphocholine + a fatty acid + H(+). Inhibited by chemical modifications mediated by p-BPB, anhydrous acetic acid and NBSF. Snake venom phospholipase A2 (PLA2) that has a strong dose-dependent anticoagulant effect. In vivo, intramuscular and intervenal injection causes muscle necrosis. Induces moderate edema in the mouse foot pad. PLA2 catalyzes the calcium-dependent hydrolysis of the 2-acyl groups in 3-sn-phosphoglycerides. In Crotalus durissus cumanensis (South American rattlesnake), this protein is Basic phospholipase A2 10.